The chain runs to 327 residues: Methionyl-tRNA formyltransferase (327 aa).

121-124 (SLLP) serves as a coordination point for (6S)-5,6,7,8-tetrahydrofolate.

The protein belongs to the Fmt family.

The enzyme catalyses L-methionyl-tRNA(fMet) + (6R)-10-formyltetrahydrofolate = N-formyl-L-methionyl-tRNA(fMet) + (6S)-5,6,7,8-tetrahydrofolate + H(+). Functionally, attaches a formyl group to the free amino group of methionyl-tRNA(fMet). The formyl group appears to play a dual role in the initiator identity of N-formylmethionyl-tRNA by promoting its recognition by IF2 and preventing the misappropriation of this tRNA by the elongation apparatus. The protein is Methionyl-tRNA formyltransferase of Burkholderia ambifaria (strain MC40-6).